Here is a 411-residue protein sequence, read N- to C-terminus: Tyrosine--tRNA ligase (411 aa).

Y34 is an L-tyrosine binding site. The short motif at C39–S48 is the 'HIGH' region element. Positions 171 and 175 each coordinate L-tyrosine. Residues K231–T235 carry the 'KMSKS' region motif. Position 234 (K234) interacts with ATP. Residues I345 to V411 form the S4 RNA-binding domain.

Belongs to the class-I aminoacyl-tRNA synthetase family. TyrS type 1 subfamily. As to quaternary structure, homodimer.

It is found in the cytoplasm. The enzyme catalyses tRNA(Tyr) + L-tyrosine + ATP = L-tyrosyl-tRNA(Tyr) + AMP + diphosphate + H(+). Catalyzes the attachment of tyrosine to tRNA(Tyr) in a two-step reaction: tyrosine is first activated by ATP to form Tyr-AMP and then transferred to the acceptor end of tRNA(Tyr). The protein is Tyrosine--tRNA ligase of Rickettsia peacockii (strain Rustic).